Reading from the N-terminus, the 215-residue chain is Nucleoredoxin-like protein 1 (215 aa).

In terms of domain architecture, Thioredoxin; atypical spans 1–165; that stretch reads MADLFLDKIL…VSEIIDRSFL (165 aa). Positions 185-194 are enriched in basic and acidic residues; the sequence is IKYKDETTNE. Positions 185–215 are disordered; the sequence is IKYKDETTNEKKKRKHCDDEDEGGGGGTEFF.

It belongs to the nucleoredoxin family.

The protein resides in the cell projection. It is found in the cilium. Its subcellular location is the photoreceptor outer segment. In terms of biological role, plays an important role in retinal cone photoreceptor survival. May play a role in cone cell viability, slowing down cone degeneration, does not seem to play a role in degenerating rods. In Xenopus laevis (African clawed frog), this protein is Nucleoredoxin-like protein 1 (nxnl1).